Reading from the N-terminus, the 76-residue chain is UPF0154 protein Sca_0984 (76 aa).

The chain crosses the membrane as a helical span at residues 4–24; it reads WLAILLIVAALIIGLVGGFFL.

Belongs to the UPF0154 family.

Its subcellular location is the cell membrane. In Staphylococcus carnosus (strain TM300), this protein is UPF0154 protein Sca_0984.